We begin with the raw amino-acid sequence, 212 residues long: Uridine kinase (212 aa).

13–20 (GASASGKS) is an ATP binding site.

Belongs to the uridine kinase family.

The protein resides in the cytoplasm. The enzyme catalyses uridine + ATP = UMP + ADP + H(+). The catalysed reaction is cytidine + ATP = CMP + ADP + H(+). It participates in pyrimidine metabolism; CTP biosynthesis via salvage pathway; CTP from cytidine: step 1/3. Its pathway is pyrimidine metabolism; UMP biosynthesis via salvage pathway; UMP from uridine: step 1/1. The protein is Uridine kinase of Shewanella baltica (strain OS155 / ATCC BAA-1091).